A 1064-amino-acid chain; its full sequence is MPKRNDIKKIMIIGSGPIIIGQAAEFDYAGTQACLALKEEGYEVVLVNSNPATIMTDREIADTVYIEPITLEFVSKILRKERPDALLPTLGGQTGLNMAMELSKTGILEELNVELLGTKLSAIDQAEDRELFKELCESINEPLCASDIATTVEEAINIADKIGYPIIVRPAFTMGGTGGGICDTEEELREIVANGLKLSPVTQCLIEESIAGYKEIEYEVMRDSADNAIVVCNMENFDPVGVHTGDSIVFAPSQTLSDNEYQMLRDASLNIIRALKIEGGCNVQLALDPNSYEYRVIEVNPRVSRSSALASKATGYPIAKMSAKIAIGMTLDEIINPVTNKTYAMFEPALDYVVAKIARFPFDKFENGDRHLGTQMKATGEVMAIGRNIEESLLKAVRSLEIGVFHNEMTEAIEADDEKLYEKMVKTQDDRLFYVSEAIRRGIPIEEIADLTKIDIFFLDKLLYIVEIENQLKVNIFEPELLKTAKKNGFSDREIAKLWNVTPEEVRRRRQENKIIPVYKMVDTCAAEFESSTPYFYSTYEWENESKRSDKEKIIVLGSGPIRIGQGVEFDYATVHCVKAIQALGKEAIVINSNPETVSTDFSISDKLYFEPLTFEDVMNVIDLEEPLGVIVQFGGQTAINLAEPLSKAGVKILGTQVEDLDRAEDRDLFEKALQDLDIPQPPGATATNEEEAVANANKIGYPVLIRPSFVLGGRAMEIINNEKDLRDYMNRAVKASPEHPVLVDSYLQGQECEVDAICDGKEVLLPGIMEHIERAGVHSGDSMAVYPPQNLSQAIIDTIVDYTKRLAIGLNCIGMMNIQFVIYEEQVYVIEVNPRASRTVPFLSKVTNIPMAQLATQMILGENLKDLGYEAGLAPTPDMVHVKAPVFSFTKLAKVDSLLGPEMKSTGEAMGSDVTLEKALYKSFEAAKLHMADYGSVLFTVADEDKEETLALAKDFAEIGYSLVATAGTAAFLKENGLYVREVEKLAGGEDEEGTLVEDIRQGRVQAVVNTMGNTRASLTTATDGFRIRQEAISRGIPLFTSLDTVAAILKVMQSRSFTTKNI.

Residues 1 to 401 (MPKRNDIKKI…SLLKAVRSLE (401 aa)) form a carboxyphosphate synthetic domain region. Positions 129, 169, 175, 176, 208, 210, 215, 241, 242, 243, 284, and 298 each coordinate ATP. The ATP-grasp 1 domain maps to 133-327 (KELCESINEP…IAKMSAKIAI (195 aa)). Gln-284, Glu-298, and Asn-300 together coordinate Mg(2+). The Mn(2+) site is built by Gln-284, Glu-298, and Asn-300. Residues 402–546 (IGVFHNEMTE…YSTYEWENES (145 aa)) form an oligomerization domain region. Residues 547 to 929 (KRSDKEKIIV…ALYKSFEAAK (383 aa)) form a carbamoyl phosphate synthetic domain region. An ATP-grasp 2 domain is found at 671-861 (EKALQDLDIP…MAQLATQMIL (191 aa)). Residues Arg-707, Ser-746, Leu-748, Glu-752, Gly-777, Val-778, His-779, Ser-780, Gln-820, and Glu-832 each contribute to the ATP site. Residues Gln-820, Glu-832, and Asn-834 each coordinate Mg(2+). Mn(2+) contacts are provided by Gln-820, Glu-832, and Asn-834. Positions 930-1064 (LHMADYGSVL…QSRSFTTKNI (135 aa)) constitute an MGS-like domain. The tract at residues 930-1064 (LHMADYGSVL…QSRSFTTKNI (135 aa)) is allosteric domain.

This sequence belongs to the CarB family. In terms of assembly, composed of two chains; the small (or glutamine) chain promotes the hydrolysis of glutamine to ammonia, which is used by the large (or ammonia) chain to synthesize carbamoyl phosphate. Tetramer of heterodimers (alpha,beta)4. The cofactor is Mg(2+). Mn(2+) is required as a cofactor.

The enzyme catalyses hydrogencarbonate + L-glutamine + 2 ATP + H2O = carbamoyl phosphate + L-glutamate + 2 ADP + phosphate + 2 H(+). The catalysed reaction is hydrogencarbonate + NH4(+) + 2 ATP = carbamoyl phosphate + 2 ADP + phosphate + 2 H(+). Its pathway is amino-acid biosynthesis; L-arginine biosynthesis; carbamoyl phosphate from bicarbonate: step 1/1. It functions in the pathway pyrimidine metabolism; UMP biosynthesis via de novo pathway; (S)-dihydroorotate from bicarbonate: step 1/3. Large subunit of the glutamine-dependent carbamoyl phosphate synthetase (CPSase). CPSase catalyzes the formation of carbamoyl phosphate from the ammonia moiety of glutamine, carbonate, and phosphate donated by ATP, constituting the first step of 2 biosynthetic pathways, one leading to arginine and/or urea and the other to pyrimidine nucleotides. The large subunit (synthetase) binds the substrates ammonia (free or transferred from glutamine from the small subunit), hydrogencarbonate and ATP and carries out an ATP-coupled ligase reaction, activating hydrogencarbonate by forming carboxy phosphate which reacts with ammonia to form carbamoyl phosphate. The protein is Carbamoyl phosphate synthase large chain of Lactococcus lactis subsp. cremoris (strain MG1363).